Reading from the N-terminus, the 166-residue chain is PTS system glucose-specific EIIA component (166 aa).

Residues 36–140 (DVVFSEKIVG…SVLTPIVISN (105 aa)) form the PTS EIIA type-1 domain. The Zn(2+) site is built by His73 and His88. His88 serves as the catalytic Tele-phosphohistidine intermediate; for EIIA activity. His88 is modified (phosphohistidine; by HPr).

As to quaternary structure, heterodimer with glycerol kinase (glpk). Zn(2+) serves as cofactor.

Its subcellular location is the cytoplasm. In terms of biological role, the phosphoenolpyruvate-dependent sugar phosphotransferase system (sugar PTS), a major carbohydrate active transport system, catalyzes the phosphorylation of incoming sugar substrates concomitantly with their translocation across the cell membrane. The enzyme II complex composed of PtsG and Crr is involved in glucose transport. In Haemophilus influenzae (strain ATCC 51907 / DSM 11121 / KW20 / Rd), this protein is PTS system glucose-specific EIIA component (crr).